The sequence spans 402 residues: Lipid-A-disaccharide synthase (402 aa).

The protein belongs to the LpxB family.

The enzyme catalyses a lipid X + a UDP-2-N,3-O-bis[(3R)-3-hydroxyacyl]-alpha-D-glucosamine = a lipid A disaccharide + UDP + H(+). The protein operates within bacterial outer membrane biogenesis; LPS lipid A biosynthesis. Its function is as follows. Condensation of UDP-2,3-diacylglucosamine and 2,3-diacylglucosamine-1-phosphate to form lipid A disaccharide, a precursor of lipid A, a phosphorylated glycolipid that anchors the lipopolysaccharide to the outer membrane of the cell. This Cupriavidus pinatubonensis (strain JMP 134 / LMG 1197) (Cupriavidus necator (strain JMP 134)) protein is Lipid-A-disaccharide synthase.